Reading from the N-terminus, the 203-residue chain is A-type ATP synthase subunit E (203 aa).

It belongs to the V-ATPase E subunit family. In terms of assembly, has multiple subunits with at least A(3), B(3), C, D, E, F, H, I and proteolipid K(x).

It is found in the cell membrane. In terms of biological role, component of the A-type ATP synthase that produces ATP from ADP in the presence of a proton gradient across the membrane. The chain is A-type ATP synthase subunit E from Thermococcus sibiricus (strain DSM 12597 / MM 739).